Consider the following 188-residue polypeptide: GMP synthase [glutamine-hydrolyzing] subunit A (188 aa).

A Glutamine amidotransferase type-1 domain is found at 2–188 (KVAVIYFGGQ…FKNFIKICRK (187 aa)). Cys79 functions as the Nucleophile in the catalytic mechanism. Catalysis depends on residues His166 and Glu168.

As to quaternary structure, heterodimer composed of a glutamine amidotransferase subunit (A) and a GMP-binding subunit (B).

It catalyses the reaction XMP + L-glutamine + ATP + H2O = GMP + L-glutamate + AMP + diphosphate + 2 H(+). The protein operates within purine metabolism; GMP biosynthesis; GMP from XMP (L-Gln route): step 1/1. Catalyzes the synthesis of GMP from XMP. This is GMP synthase [glutamine-hydrolyzing] subunit A from Sulfolobus acidocaldarius (strain ATCC 33909 / DSM 639 / JCM 8929 / NBRC 15157 / NCIMB 11770).